The primary structure comprises 262 residues: Urease accessory protein UreD (262 aa).

It belongs to the UreD family. In terms of assembly, ureD, UreF and UreG form a complex that acts as a GTP-hydrolysis-dependent molecular chaperone, activating the urease apoprotein by helping to assemble the nickel containing metallocenter of UreC. The UreE protein probably delivers the nickel.

It localises to the cytoplasm. In terms of biological role, required for maturation of urease via the functional incorporation of the urease nickel metallocenter. In Acetivibrio thermocellus (strain ATCC 27405 / DSM 1237 / JCM 9322 / NBRC 103400 / NCIMB 10682 / NRRL B-4536 / VPI 7372) (Clostridium thermocellum), this protein is Urease accessory protein UreD.